Here is a 185-residue protein sequence, read N- to C-terminus: Dual specificity protein phosphatase 3 (185 aa).

The region spanning 28–179 is the Tyrosine-protein phosphatase domain; the sequence is QPCNEVTPRI…LCQLNDRLAK (152 aa). Cys-124 serves as the catalytic Phosphocysteine intermediate.

Belongs to the protein-tyrosine phosphatase family. Non-receptor class dual specificity subfamily. Microtubule inner protein component of sperm flagellar doublet microtubules. Interacts with VRK3; this interaction activates DUSP3 phosphatase activity.

It is found in the nucleus. The protein localises to the cytoplasm. Its subcellular location is the cytoskeleton. It localises to the flagellum axoneme. It carries out the reaction O-phospho-L-tyrosyl-[protein] + H2O = L-tyrosyl-[protein] + phosphate. The catalysed reaction is O-phospho-L-seryl-[protein] + H2O = L-seryl-[protein] + phosphate. The enzyme catalyses O-phospho-L-threonyl-[protein] + H2O = L-threonyl-[protein] + phosphate. Its function is as follows. Shows activity both for tyrosine-protein phosphate and serine-protein phosphate, but displays a strong preference toward phosphotyrosines. Specifically dephosphorylates and inactivates ERK1 and ERK2. The chain is Dual specificity protein phosphatase 3 (DUSP3) from Homo sapiens (Human).